Reading from the N-terminus, the 263-residue chain is Interleukin-22 receptor subunit alpha-2 (263 aa).

A signal peptide spans 1–21; it reads MMPKHCFLGFLISFFLTGVAG. Fibronectin type-III domains lie at 26 to 68, 100 to 161, and 162 to 263; these read HESL…KIMF, GQRQ…TKID, and PPVM…VEIP. An N-linked (GlcNAc...) asparagine glycan is attached at asparagine 56. Residues cysteine 110 and cysteine 118 are joined by a disulfide bond. N-linked (GlcNAc...) asparagine glycosylation is found at asparagine 166, asparagine 171, asparagine 192, and asparagine 209. Cysteine 238 and cysteine 259 form a disulfide bridge.

It belongs to the type II cytokine receptor family. In terms of tissue distribution, expressed in placenta, spleen, breast, skin and lung. Also detected in intestinal tract, testis, brain, heart and thymus. No expression found in prostate, bladder, kidney, ovary, muscle, bone marrow, liver and uterus. Isoform 1 is expressed only in placenta. Isoform 2 is expressed in placenta and breast and at lower level in spleen, skin, thymus and stomach.

The protein resides in the secreted. In terms of biological role, isoform 2 is a receptor for IL22. Binds to IL22, prevents interaction with the functional IL-22R complex and blocks the activity of IL22 (in vitro). May play an important role as an IL22 antagonist in the regulation of inflammatory responses. Functionally, isoform 1 may play a role in establishing and maintaining successful pregnancy. This is Interleukin-22 receptor subunit alpha-2 (IL22RA2) from Homo sapiens (Human).